A 238-amino-acid chain; its full sequence is C-reactive protein (238 aa).

Residues 1–16 form the signal peptide; it reads MERFALWFIFLAGSLA. Residue Q17 is modified to Pyrrolidone carboxylic acid. The 203-residue stretch at 21–223 folds into the Pentraxin (PTX) domain; sequence VGNVFLFPKP…QATTQPKRQC (203 aa). C52 and C113 form a disulfide bridge. Residues D76, N77, E154, Q155, D156, and Q166 each coordinate Ca(2+).

Belongs to the pentraxin family. Homodimer; disulfide-linked. It is not known if it assembles into a pentraxin (or pentaxin) structure. Pentaxins have a discoid arrangement of 5 non-covalently bound subunits. The cofactor is Ca(2+). Post-translationally, cys-89 or Cys-223 or Cys-236 could be involved in interchain disulfide linkage.

The protein resides in the secreted. Its function is as follows. Displays several functions associated with host defense: it promotes agglutination, bacterial capsular swelling, phagocytosis, and complement fixation through its calcium-dependent binding to phosphorylcholine. In Xenopus laevis (African clawed frog), this protein is C-reactive protein (crp).